A 238-amino-acid chain; its full sequence is Phosphoribosylaminoimidazole-succinocarboxamide synthase (238 aa).

The protein belongs to the SAICAR synthetase family.

The catalysed reaction is 5-amino-1-(5-phospho-D-ribosyl)imidazole-4-carboxylate + L-aspartate + ATP = (2S)-2-[5-amino-1-(5-phospho-beta-D-ribosyl)imidazole-4-carboxamido]succinate + ADP + phosphate + 2 H(+). It functions in the pathway purine metabolism; IMP biosynthesis via de novo pathway; 5-amino-1-(5-phospho-D-ribosyl)imidazole-4-carboxamide from 5-amino-1-(5-phospho-D-ribosyl)imidazole-4-carboxylate: step 1/2. The protein is Phosphoribosylaminoimidazole-succinocarboxamide synthase of Methanococcoides burtonii (strain DSM 6242 / NBRC 107633 / OCM 468 / ACE-M).